Here is a 107-residue protein sequence, read N- to C-terminus: Ig kappa chain V region 4135 (107 aa).

Positions 1–24 (ADIVMTQTPASVSEPVGGTVTIKC) are framework-1. Residues 25-35 (QTSQSIDDYLS) form a complementarity-determining-1 region. Residues 36–50 (WYQQKPGQPPKGLIY) form a framework-2 region. Positions 51–57 (RASTLAS) are complementarity-determining-2. The tract at residues 58–89 (GVPSRFRGSGSGTDFTLTISDLECADAATYYC) is framework-3. Residues 90 to 96 (QSTYGVG) form a complementarity-determining-3 region. The tract at residues 97–106 (FGGGTEVVVK) is framework-4.

The protein is Ig kappa chain V region 4135 of Oryctolagus cuniculus (Rabbit).